Reading from the N-terminus, the 103-residue chain is Acyl carrier protein homolog (103 aa).

A Carrier domain is found at E3–T87. S45 bears the O-(pantetheine 4'-phosphoryl)serine mark.

Post-translationally, 4'-phosphopantetheine is transferred from CoA to a specific serine of the apo-ACP-like protein.

The protein resides in the cytoplasm. Its function is as follows. Acyl carrier protein. This is Acyl carrier protein homolog from Clostridium acetobutylicum (strain ATCC 824 / DSM 792 / JCM 1419 / IAM 19013 / LMG 5710 / NBRC 13948 / NRRL B-527 / VKM B-1787 / 2291 / W).